Consider the following 220-residue polypeptide: Cytidylate kinase (220 aa).

10-18 is a binding site for ATP; it reads GPASSGKST.

This sequence belongs to the cytidylate kinase family. Type 1 subfamily.

Its subcellular location is the cytoplasm. It catalyses the reaction CMP + ATP = CDP + ADP. The catalysed reaction is dCMP + ATP = dCDP + ADP. This chain is Cytidylate kinase, found in Lactococcus lactis subsp. cremoris (strain MG1363).